The primary structure comprises 468 residues: MEGKVLQILGPVVDVEFEGDIPAINEALYVEFEAEGEKKKVVLEVAAQIGDHIVRTIAMDLTDGLTRGEKVVATGAPIKVPVGEAVLGRIFNVTGDVIDGGEEVPADTPRWSIHRDAPPFEEQSTKMEVFETGIKVVDLLCPYMKGGKTGLFGGAGVGKTVIIMELIHNVAYKHSGYSVFAGVGERTREGNDLYHEMKESGVLDKVALCYGQMNEPPGCRNRVAMTGLTMAEYFRDEEGRDVLMFIDNIFRFAQAGAEMSALLGRIPSAVGYQPTLATEMGKLQERITSTKKGSITSIQAVYVPADDLTDPAPASVFAHLDSTTVLNRKIAEKGIYPAVDPLDSTSRILDPQIVGEEHYRVARGVQEVLQKYKDLQDIIAILGMDELSEEDKLTVARARKIEKFLSQPFFVAKVFTGADGRYVELDKTIAGFKEILEGKVDDLPENAFYMVGDLDEAKEKAEKMKAQS.

Position 153 to 160 (153 to 160 (GGAGVGKT)) interacts with ATP.

The protein belongs to the ATPase alpha/beta chains family. As to quaternary structure, F-type ATPases have 2 components, CF(1) - the catalytic core - and CF(0) - the membrane proton channel. CF(1) has five subunits: alpha(3), beta(3), gamma(1), delta(1), epsilon(1). CF(0) has three main subunits: a(1), b(2) and c(9-12). The alpha and beta chains form an alternating ring which encloses part of the gamma chain. CF(1) is attached to CF(0) by a central stalk formed by the gamma and epsilon chains, while a peripheral stalk is formed by the delta and b chains.

The protein resides in the cell inner membrane. The catalysed reaction is ATP + H2O + 4 H(+)(in) = ADP + phosphate + 5 H(+)(out). Its function is as follows. Produces ATP from ADP in the presence of a proton gradient across the membrane. The catalytic sites are hosted primarily by the beta subunits. This is ATP synthase subunit beta from Nautilia profundicola (strain ATCC BAA-1463 / DSM 18972 / AmH).